A 183-amino-acid chain; its full sequence is Apo-citrate lyase phosphoribosyl-dephospho-CoA transferase (183 aa).

It belongs to the CitX family.

It carries out the reaction apo-[citrate lyase ACP] + 2'-(5''-triphospho-alpha-D-ribosyl)-3'-dephospho-CoA = holo-[citrate lyase ACP] + diphosphate. Functionally, transfers 2-(5''-triphosphoribosyl)-3'-dephosphocoenzyme-A on a serine residue to the apo-acyl carrier protein (gamma chain) of the citrate lyase to yield holo-acyl carrier protein. The sequence is that of Apo-citrate lyase phosphoribosyl-dephospho-CoA transferase from Shigella flexneri serotype 5b (strain 8401).